We begin with the raw amino-acid sequence, 204 residues long: Kunitz type trypsin inhibitor 106 (204 aa).

An N-terminal signal peptide occupies residues 1–26 (MSMRLSIRTLIILAHVCLFITTTTIA). Residue Asn-62 is glycosylated (N-linked (GlcNAc...) asparagine). A disulfide bridge connects residues Cys-65 and Cys-112. Residue Asn-141 is glycosylated (N-linked (GlcNAc...) asparagine). 2 disulfide bridges follow: Cys-164–Cys-176 and Cys-169–Cys-172.

This sequence belongs to the protease inhibitor I3 (leguminous Kunitz-type inhibitor) family. As to quaternary structure, interacts with SCP1 and CP. As to expression, expressed at low levels in non-mycorrhizal roots.

It localises to the secreted. It is found in the extracellular space. Its subcellular location is the apoplast. In terms of biological role, protease inhibitor that, together with SCP1, controls mycorrhiza establishment and arbuscule development during root colonization by arbuscular mycorrhizal (AM) fungi (e.g. Rhizophagus irregularis), probably by degrading SCP1 in the apoplast of the periarbuscular region. This is Kunitz type trypsin inhibitor 106 from Medicago truncatula (Barrel medic).